Reading from the N-terminus, the 237-residue chain is 2-C-methyl-D-erythritol 4-phosphate cytidylyltransferase (237 aa).

Belongs to the IspD/TarI cytidylyltransferase family. IspD subfamily. In terms of assembly, homodimer.

It catalyses the reaction 2-C-methyl-D-erythritol 4-phosphate + CTP + H(+) = 4-CDP-2-C-methyl-D-erythritol + diphosphate. The protein operates within isoprenoid biosynthesis; isopentenyl diphosphate biosynthesis via DXP pathway; isopentenyl diphosphate from 1-deoxy-D-xylulose 5-phosphate: step 2/6. Its function is as follows. Catalyzes the formation of 4-diphosphocytidyl-2-C-methyl-D-erythritol from CTP and 2-C-methyl-D-erythritol 4-phosphate (MEP). This is 2-C-methyl-D-erythritol 4-phosphate cytidylyltransferase from Pectobacterium atrosepticum (strain SCRI 1043 / ATCC BAA-672) (Erwinia carotovora subsp. atroseptica).